The following is a 31-amino-acid chain: LysM-domain containing protein (31 aa).

One copy of the LysM 1 repeat lies at 1-28 (YSPSLTDLQSYNAMNGPALKAGDILAVP).

The sequence is that of LysM-domain containing protein from Jatropha curcas (Barbados nut).